The following is a 324-amino-acid chain: Probable RuBisCO transcriptional regulator (324 aa).

One can recognise an HTH lysR-type domain in the interval 8–65 (FSLEQLRILKAIATEGSFKKAAESLYMTQPAISLQIQTLEKKLNIALFDRSGRRALMT). A DNA-binding region (H-T-H motif) is located at residues 25 to 44 (FKKAAESLYMTQPAISLQIQ).

It belongs to the LysR transcriptional regulatory family.

Its subcellular location is the plastid. It is found in the cyanelle. Functionally, trans-acting transcriptional regulator of RuBisCO genes (rbcL and rbcS) expression. This Cyanophora paradoxa protein is Probable RuBisCO transcriptional regulator (rbcR).